We begin with the raw amino-acid sequence, 118 residues long: Small ribosomal subunit protein uS13 (118 aa).

The segment at Ser94–Lys118 is disordered.

This sequence belongs to the universal ribosomal protein uS13 family. Part of the 30S ribosomal subunit. Forms a loose heterodimer with protein S19. Forms two bridges to the 50S subunit in the 70S ribosome.

Functionally, located at the top of the head of the 30S subunit, it contacts several helices of the 16S rRNA. In the 70S ribosome it contacts the 23S rRNA (bridge B1a) and protein L5 of the 50S subunit (bridge B1b), connecting the 2 subunits; these bridges are implicated in subunit movement. Contacts the tRNAs in the A and P-sites. This chain is Small ribosomal subunit protein uS13, found in Actinobacillus pleuropneumoniae serotype 5b (strain L20).